The chain runs to 244 residues: Eukaryotic translation initiation factor 4E type 1B (244 aa).

Residues 1-26 show a composition bias toward basic and acidic residues; sequence MNKVEGGGHKEEVVVKEKEVVKEKPS. The interval 1 to 57 is disordered; the sequence is MNKVEGGGHKEEVVVKEKEVVKEKPSEATAEGVQAGEAKDLPGSLKTQRRKAHREHP. Residues 65–68 form an EIF4EBP1/2/3 binding region; the sequence is HPLQ. Position 84-85 (84-85) interacts with mRNA; it reads WQ. The tract at residues 101–105 is EIF4EBP1/2/3 binding; the sequence is WAVYS. Residue 130–131 coordinates mRNA; that stretch reads WE. Residues 160-167 form an EIF4EBP1/2/3 binding region; the sequence is ETLLCLVG. MRNA-binding positions include 185–190 and 233–235; these read RTKRDK and AKS.

Belongs to the eukaryotic initiation factor 4E family. In terms of assembly, EIF4F is a multi-subunit complex, the composition of which varies with external and internal environmental conditions. It is composed of at least EIF4A, EIF4E and EIF4G.

Functionally, recognizes and binds the 7-methylguanosine-containing mRNA cap during an early step in the initiation of protein synthesis and facilitates ribosome binding by inducing the unwinding of the mRNAs secondary structures. This chain is Eukaryotic translation initiation factor 4E type 1B (Eif4e1b), found in Mus musculus (Mouse).